The primary structure comprises 84 residues: uncharacterized protein (84 aa).

It belongs to the chlamydial CPn_0710/CT_666/TC_0037 family.

This is an uncharacterized protein from Chlamydia pneumoniae (Chlamydophila pneumoniae).